The primary structure comprises 326 residues: Mitochondrial glycine transporter (326 aa).

Solcar repeat units follow at residues histidine 45–tyrosine 134, proline 141–alanine 225, and leucine 237–arginine 321. 6 consecutive transmembrane segments (helical) span residues phenylalanine 51–glutamine 76, glycine 109–phenylalanine 135, valine 147–glutamate 172, glycine 200–arginine 223, isoleucine 241–methionine 267, and glycine 296–valine 314.

Belongs to the mitochondrial carrier (TC 2.A.29) family. SLC25A38 subfamily.

The protein localises to the mitochondrion inner membrane. The catalysed reaction is glycine(in) = glycine(out). Its function is as follows. Mitochondrial glycine transporter that imports glycine into the mitochondrial matrix. Plays an important role in providing glycine for the first enzymatic step in heme biosynthesis, the condensation of glycine with succinyl-CoA to produce 5-aminolevulinate (ALA) in the mitochondrial matrix. Required during erythropoiesis. In terms of biological role, plays a role as pro-apoptotic protein that induces caspase-dependent apoptosis. This chain is Mitochondrial glycine transporter, found in Mus musculus (Mouse).